A 311-amino-acid chain; its full sequence is Olfactory receptor 1L4 (311 aa).

At 1–26 the chain is on the extracellular side; the sequence is METKNYSSSTSGFILLGLSSNPKLQK. N-linked (GlcNAc...) asparagine glycosylation occurs at asparagine 5. Residues 27-50 form a helical membrane-spanning segment; that stretch reads PLFAIFLIMYLLTAVGNVLIILAI. Residues 51-58 are Cytoplasmic-facing; sequence YSDPRLHT. The helical transmembrane segment at 59-80 threads the bilayer; it reads PMYFFLSNLSFMDICFTTVIVP. At 81–101 the chain is on the extracellular side; sequence KMLVNFLSETKIISYVGCLIQ. Cysteine 98 and cysteine 190 are disulfide-bonded. The chain crosses the membrane as a helical span at residues 102-121; that stretch reads MYFFMAFGNTDSYLLASMAI. Residues 122 to 140 lie on the Cytoplasmic side of the membrane; it reads DRLVAICNPLHYDVVMKPW. Residues 141–159 form a helical membrane-spanning segment; sequence HCLLMLLGSCSISHLHSLF. Residues 160–197 are Extracellular-facing; the sequence is RVLLMSRLSFCASHIIKHFFCDTQPVLKLSCSDTSSSQ. The helical transmembrane segment at 198-220 threads the bilayer; it reads MVVMTETLAVIVTPFLCTIFSYL. Residues 221 to 237 lie on the Cytoplasmic side of the membrane; the sequence is QIIVTVLRIPSAAGKWK. A helical transmembrane segment spans residues 238–260; it reads AFSTCGSHLTVVVLFYGSVIYVY. The Extracellular portion of the chain corresponds to 261 to 273; sequence FRPLSMYSVMKGR. Residues 274–293 traverse the membrane as a helical segment; the sequence is VATVMYTVVTPMLNPFIYSL. Residues 294-311 lie on the Cytoplasmic side of the membrane; it reads RNKDMKRGLKKLRHRIYS.

It belongs to the G-protein coupled receptor 1 family.

Its subcellular location is the cell membrane. Odorant receptor. This chain is Olfactory receptor 1L4 (OR1L4), found in Homo sapiens (Human).